Consider the following 308-residue polypeptide: Probable 5-dehydro-4-deoxyglucarate dehydratase (308 aa).

The protein belongs to the DapA family.

It catalyses the reaction 5-dehydro-4-deoxy-D-glucarate + H(+) = 2,5-dioxopentanoate + CO2 + H2O. Its pathway is carbohydrate acid metabolism; D-glucarate degradation; 2,5-dioxopentanoate from D-glucarate: step 2/2. The protein is Probable 5-dehydro-4-deoxyglucarate dehydratase (ycbC) of Bacillus subtilis (strain 168).